We begin with the raw amino-acid sequence, 425 residues long: Kynureninase (425 aa).

Pyridoxal 5'-phosphate contacts are provided by residues Leu105, Thr106, 133–136 (FPSD), Asp218, His221, and Tyr243. Position 244 is an N6-(pyridoxal phosphate)lysine (Lys244). Positions 274 and 302 each coordinate pyridoxal 5'-phosphate.

It belongs to the kynureninase family. In terms of assembly, homodimer. Pyridoxal 5'-phosphate is required as a cofactor.

It catalyses the reaction L-kynurenine + H2O = anthranilate + L-alanine + H(+). The catalysed reaction is 3-hydroxy-L-kynurenine + H2O = 3-hydroxyanthranilate + L-alanine + H(+). The protein operates within amino-acid degradation; L-kynurenine degradation; L-alanine and anthranilate from L-kynurenine: step 1/1. Its pathway is cofactor biosynthesis; NAD(+) biosynthesis; quinolinate from L-kynurenine: step 2/3. Its function is as follows. Catalyzes the cleavage of L-kynurenine (L-Kyn) and L-3-hydroxykynurenine (L-3OHKyn) into anthranilic acid (AA) and 3-hydroxyanthranilic acid (3-OHAA), respectively. The polypeptide is Kynureninase (Christiangramia forsetii (strain DSM 17595 / CGMCC 1.15422 / KT0803) (Gramella forsetii)).